Here is a 2471-residue protein sequence, read N- to C-terminus: Histidine protein kinase 1 (2471 aa).

Positions 1–10 are enriched in polar residues; it reads MSMNFFNSSE. 3 disordered regions span residues 1-30, 52-75, and 395-415; these read MSMN…TEHY, ETKK…VPPS, and RQGS…FNIG. The span at 11–30 shows a compositional bias: basic and acidic residues; that stretch reads PARDHKPDQEKETVMTTEHY. The region spanning 358 to 636 is the Protein kinase domain; sequence EHPSQSTDQK…DCHSLLHDLI (279 aa). The 222-residue stretch at 2004 to 2225 folds into the Histidine kinase domain; it reads NMSHEIRTPF…TFYVSVIMDA (222 aa). His-2007 is subject to Phosphohistidine; by autocatalysis. Residues 2340 to 2466 form the Response regulatory domain; it reads RILLAEDNLL…ELRRILTKVG (127 aa). Residue Asp-2394 is modified to 4-aspartylphosphate.

Post-translationally, the phosphorelay mechanism involves the sequential transfer of a phosphate group from His-2007 (H1) in the histidine kinase domain (transmitter domain) to Asp-2394 (D1) of the response regulatory domain (receiver domain). This transfer probably occurs between two CHK1 molecules, rather than intramolecularly.

It catalyses the reaction ATP + protein L-histidine = ADP + protein N-phospho-L-histidine.. In terms of biological role, histidine kinase involved in a two-component signaling pathway that regulates cell wall mannan and glucan biosynthesis. Regulates quorum sensing as well as hyphal formation, biofilm formation, chlamidospore formation, and virulence. Plays a prominent role in phagocyte activation. Involved in the covering of the most potent pro-inflammatory cell wall molecules, the beta-glucans, underneath a dense mannan layer, so that the pathogen becomes partly invisible for immune cells such as phagocytes. The chain is Histidine protein kinase 1 (CHK1) from Candida albicans (strain SC5314 / ATCC MYA-2876) (Yeast).